We begin with the raw amino-acid sequence, 311 residues long: Olfactory receptor 1073 (311 aa).

Residues 1-25 are Extracellular-facing; sequence MKQQNDTQILQFLLLGLSENTELQP. The N-linked (GlcNAc...) asparagine glycan is linked to Asn-5. A helical transmembrane segment spans residues 26 to 46; the sequence is LIYWLFFSMYLVTVWGNLIII. Over 47–57 the chain is Cytoplasmic; the sequence is LATVLDFRLHT. A helical membrane pass occupies residues 58–78; it reads AMYFFLCNLSFVDICLISTTI. Over 79 to 97 the chain is Extracellular; that stretch reads PKMLANVHLNHKAITYEGC. Cysteines 97 and 179 form a disulfide. Residues 98 to 118 form a helical membrane-spanning segment; the sequence is IMQIYFFTLFVGLDNFLLAVM. The Cytoplasmic segment spans residues 119–133; it reads AYDRFVAICHPLRYT. The helical transmembrane segment at 134–154 threads the bilayer; the sequence is SIMTPHLCMSLVLVSWIASVL. N-linked (GlcNAc...) asparagine glycosylation occurs at Asn-155. Residues 155–196 lie on the Extracellular side of the membrane; sequence NSSLQSFLVLQLSFCTEVEIPHFFCELSMLVHLACSDTFLSD. A helical transmembrane segment spans residues 197-217; sequence MAMNVLAALLGGGCLVGILYS. Over 218–244 the chain is Cytoplasmic; that stretch reads YSKIVSSIQAISSAEGKYKAFSTCVSH. A helical membrane pass occupies residues 245-265; the sequence is LSVVSLFYCTLLGVYLSSAVT. At 266–271 the chain is on the extracellular side; the sequence is QNSHST. The chain crosses the membrane as a helical span at residues 272–292; that stretch reads AATSLMYTVVTPMLNPFIYSL. Residues 293–311 lie on the Cytoplasmic side of the membrane; sequence RNDNIKRALKNFVKKKLEK.

It belongs to the G-protein coupled receptor 1 family. As to expression, tongue specific.

It is found in the cell membrane. Possible taste receptor. This Rattus norvegicus (Rat) protein is Olfactory receptor 1073 (Olr1073).